We begin with the raw amino-acid sequence, 509 residues long: ATP synthase subunit alpha, mitochondrial (509 aa).

ATP is bound at residue 171–178; sequence GDRQTGKT.

This sequence belongs to the ATPase alpha/beta chains family. As to quaternary structure, F-type ATPases have 2 components, CF(1) - the catalytic core - and CF(0) - the membrane proton channel. CF(1) has five subunits: alpha(3), beta(3), gamma(1), delta(1), epsilon(1). CF(0) has three main subunits: a, b and c.

Its subcellular location is the mitochondrion. It localises to the mitochondrion inner membrane. In terms of biological role, mitochondrial membrane ATP synthase (F(1)F(0) ATP synthase or Complex V) produces ATP from ADP in the presence of a proton gradient across the membrane which is generated by electron transport complexes of the respiratory chain. F-type ATPases consist of two structural domains, F(1) - containing the extramembraneous catalytic core, and F(0) - containing the membrane proton channel, linked together by a central stalk and a peripheral stalk. During catalysis, ATP synthesis in the catalytic domain of F(1) is coupled via a rotary mechanism of the central stalk subunits to proton translocation. Subunits alpha and beta form the catalytic core in F(1). Rotation of the central stalk against the surrounding alpha(3)beta(3) subunits leads to hydrolysis of ATP in three separate catalytic sites on the beta subunits. Subunit alpha does not bear the catalytic high-affinity ATP-binding sites. The sequence is that of ATP synthase subunit alpha, mitochondrial (ATPA) from Oryza sativa subsp. indica (Rice).